The following is a 583-amino-acid chain: Proline--tRNA ligase (583 aa).

This sequence belongs to the class-II aminoacyl-tRNA synthetase family. ProS type 1 subfamily. As to quaternary structure, homodimer.

Its subcellular location is the cytoplasm. It catalyses the reaction tRNA(Pro) + L-proline + ATP = L-prolyl-tRNA(Pro) + AMP + diphosphate. Its function is as follows. Catalyzes the attachment of proline to tRNA(Pro) in a two-step reaction: proline is first activated by ATP to form Pro-AMP and then transferred to the acceptor end of tRNA(Pro). As ProRS can inadvertently accommodate and process non-cognate amino acids such as alanine and cysteine, to avoid such errors it has two additional distinct editing activities against alanine. One activity is designated as 'pretransfer' editing and involves the tRNA(Pro)-independent hydrolysis of activated Ala-AMP. The other activity is designated 'posttransfer' editing and involves deacylation of mischarged Ala-tRNA(Pro). The misacylated Cys-tRNA(Pro) is not edited by ProRS. The chain is Proline--tRNA ligase from Aromatoleum aromaticum (strain DSM 19018 / LMG 30748 / EbN1) (Azoarcus sp. (strain EbN1)).